The primary structure comprises 104 residues: Large ribosomal subunit protein bL21 (104 aa).

Belongs to the bacterial ribosomal protein bL21 family. Part of the 50S ribosomal subunit. Contacts protein L20.

This protein binds to 23S rRNA in the presence of protein L20. The chain is Large ribosomal subunit protein bL21 from Lactococcus lactis subsp. lactis (strain IL1403) (Streptococcus lactis).